An 835-amino-acid polypeptide reads, in one-letter code: Cap-specific mRNA (nucleoside-2'-O-)-methyltransferase 1 (835 aa).

The tract at residues 1–67 (MKRRTDPECT…EGKQHSSDSF (67 aa)) is disordered. The short motif at 2–19 (KRRTDPECTAPIKKQKKR) is the Bipartite nuclear localization signal element. Residues serine 28, serine 31, serine 53, serine 66, and serine 91 each carry the phosphoserine modification. Over residues 37–54 (SSVSHGAKASTTSLSGSD) the composition is skewed to polar residues. The span at 57 to 67 (TEGKQHSSDSF) shows a compositional bias: basic and acidic residues. Residues 87 to 133 (YNSVSQKLMAKMGFREGEGLGKYSQGRKDIVEASSQKGRRGLGLTLR) enclose the G-patch domain. N6-acetyllysine is present on lysine 108. Substrate contacts are provided by residues 203-207 (KSVFD) and arginine 218. Residues 231 to 450 (FFLNRAAMKM…ERYVVCKGLK (220 aa)) form the RrmJ-type SAM-dependent 2'-O-MTase domain. Residue asparagine 234 participates in S-adenosyl-L-methionine binding. The active site involves lysine 239. S-adenosyl-L-methionine is bound by residues 277 to 283 (CAGPGGF) and 335 to 336 (DI). The active site involves aspartate 364. 374–376 (NLQ) contacts substrate. Residue lysine 404 is the Proton acceptor of the active site. A substrate-binding site is contributed by asparagine 439. The tract at residues 727–835 (SSGTPKLSYT…VLSFIQMHRA (109 aa)) is interaction with POLR2A. The WW domain maps to 752–786 (RTVNEPWTMGFSKSFKKKFFYNKKTKDSTFDLPAD).

Interacts with POLR2A (via C-terminus).

The protein localises to the nucleus. It carries out the reaction a 5'-end (N(7)-methyl 5'-triphosphoguanosine)-ribonucleoside in mRNA + S-adenosyl-L-methionine = a 5'-end (N(7)-methyl 5'-triphosphoguanosine)-(2'-O-methyl-ribonucleoside) in mRNA + S-adenosyl-L-homocysteine + H(+). Its function is as follows. S-adenosyl-L-methionine-dependent methyltransferase that mediates mRNA cap1 2'-O-ribose methylation to the 5'-cap structure of mRNAs. Methylates the ribose of the first nucleotide of a m(7)GpppG-capped mRNA and small nuclear RNA (snRNA) to produce m(7)GpppRm (cap1). Displays a preference for cap0 transcripts. Cap1 modification is linked to higher levels of translation. May be involved in the interferon response pathway. The chain is Cap-specific mRNA (nucleoside-2'-O-)-methyltransferase 1 (CMTR1) from Homo sapiens (Human).